A 153-amino-acid chain; its full sequence is Ubiquitin-conjugating enzyme E2 13 (153 aa).

The UBC core domain maps to 3–149; that stretch reads SLPKRIIKET…AREWTKLYAK (147 aa). Cys87 acts as the Glycyl thioester intermediate in catalysis. Lys92 participates in a covalent cross-link: Glycyl lysine isopeptide (Lys-Gly) (interchain with G-Cter in ubiquitin).

The protein belongs to the ubiquitin-conjugating enzyme family. In terms of assembly, heterodimer with MMS2.

It catalyses the reaction S-ubiquitinyl-[E1 ubiquitin-activating enzyme]-L-cysteine + [E2 ubiquitin-conjugating enzyme]-L-cysteine = [E1 ubiquitin-activating enzyme]-L-cysteine + S-ubiquitinyl-[E2 ubiquitin-conjugating enzyme]-L-cysteine.. It functions in the pathway protein modification; protein ubiquitination. Its function is as follows. Has a role in the DNA error-free postreplication repair (PRR) pathway. The UBC13/MMS2 heterodimer catalyzes the synthesis of non-canonical poly-ubiquitin chains that are linked through 'Lys-63'. The sequence is that of Ubiquitin-conjugating enzyme E2 13 (UBC13) from Saccharomyces cerevisiae (strain ATCC 204508 / S288c) (Baker's yeast).